Here is a 444-residue protein sequence, read N- to C-terminus: Protein kinase C and casein kinase substrate in neurons protein 1 (444 aa).

A phosphoserine mark is found at S2 and S79. Residues E13–D283 enclose the F-BAR domain. A coiled-coil region spans residues K26–I275. 2 disordered regions span residues R173–K194 and L309–K386. T184 is modified (phosphothreonine). The segment covering T314–E324 has biased composition (basic and acidic residues). Residues T329–D351 show a composition bias toward polar residues. 5 positions are modified to phosphoserine: S346, S348, S349, S361, and S365. Residues S385 to I444 form the SH3 domain. Phosphotyrosine is present on Y394. A phosphoserine mark is found at S405 and S430.

This sequence belongs to the PACSIN family. As to quaternary structure, homodimer. May form heterooligomers with other PACSINs. Interacts with both COBL and DBNL. Identified in a complex composed of COBL, PACSIN1 and WASL. Interacts (via SH3 domain) with SYNJ1 and WASL. Interacts (via SH3 domain) with DNM1; the interaction is reduced by DNM1 phosphorylation. Interacts with DNM2 and DNM3. Interacts with MAPT. Interacts with EHD1 and EHD3. Interacts with TRPV4. Post-translationally, phosphorylated by casein kinase 2 (CK2) and protein kinase C (PKC).

The protein resides in the cytoplasm. Its subcellular location is the cell projection. It localises to the synapse. It is found in the synaptosome. The protein localises to the ruffle membrane. The protein resides in the membrane. Its subcellular location is the cytoplasmic vesicle membrane. It localises to the cytosol. It is found in the cell membrane. In terms of biological role, binds to membranes via its F-BAR domain and mediates membrane tubulation. Plays a role in the reorganization of the microtubule cytoskeleton via its interaction with MAPT; this decreases microtubule stability and inhibits MAPT-induced microtubule polymerization. Plays a role in cellular transport processes by recruiting DNM1, DNM2 and DNM3 to membranes. Plays a role in the reorganization of the actin cytoskeleton and in neuron morphogenesis via its interaction with COBL and WASL, and by recruiting COBL to the cell cortex. Plays a role in the regulation of neurite formation, neurite branching and the regulation of neurite length. Required for normal synaptic vesicle endocytosis; this process retrieves previously released neurotransmitters to accommodate multiple cycles of neurotransmission. Required for normal excitatory and inhibitory synaptic transmission. The protein is Protein kinase C and casein kinase substrate in neurons protein 1 (Pacsin1) of Pongo abelii (Sumatran orangutan).